Consider the following 474-residue polypeptide: Probable glycine dehydrogenase (decarboxylating) subunit 2 (474 aa).

N6-(pyridoxal phosphate)lysine is present on Lys262.

It belongs to the GcvP family. C-terminal subunit subfamily. The glycine cleavage system is composed of four proteins: P, T, L and H. In this organism, the P 'protein' is a heterodimer of two subunits. The cofactor is pyridoxal 5'-phosphate.

It carries out the reaction N(6)-[(R)-lipoyl]-L-lysyl-[glycine-cleavage complex H protein] + glycine + H(+) = N(6)-[(R)-S(8)-aminomethyldihydrolipoyl]-L-lysyl-[glycine-cleavage complex H protein] + CO2. Its function is as follows. The glycine cleavage system catalyzes the degradation of glycine. The P protein binds the alpha-amino group of glycine through its pyridoxal phosphate cofactor; CO(2) is released and the remaining methylamine moiety is then transferred to the lipoamide cofactor of the H protein. The sequence is that of Probable glycine dehydrogenase (decarboxylating) subunit 2 from Thermotoga maritima (strain ATCC 43589 / DSM 3109 / JCM 10099 / NBRC 100826 / MSB8).